Here is a 472-residue protein sequence, read N- to C-terminus: Argininosuccinate lyase (472 aa).

This sequence belongs to the lyase 1 family. Argininosuccinate lyase subfamily.

It localises to the cytoplasm. The catalysed reaction is 2-(N(omega)-L-arginino)succinate = fumarate + L-arginine. It functions in the pathway amino-acid biosynthesis; L-arginine biosynthesis; L-arginine from L-ornithine and carbamoyl phosphate: step 3/3. In Cupriavidus necator (strain ATCC 17699 / DSM 428 / KCTC 22496 / NCIMB 10442 / H16 / Stanier 337) (Ralstonia eutropha), this protein is Argininosuccinate lyase.